Here is a 100-residue protein sequence, read N- to C-terminus: Small ribosomal subunit protein uS14c (100 aa).

This sequence belongs to the universal ribosomal protein uS14 family. In terms of assembly, part of the 30S ribosomal subunit.

The protein resides in the plastid. Its subcellular location is the chloroplast. In terms of biological role, binds 16S rRNA, required for the assembly of 30S particles. The chain is Small ribosomal subunit protein uS14c from Stigeoclonium helveticum (Green alga).